The following is a 293-amino-acid chain: Ribosomal protein L11 methyltransferase (293 aa).

4 residues coordinate S-adenosyl-L-methionine: T145, G166, D188, and N230.

It belongs to the methyltransferase superfamily. PrmA family.

It is found in the cytoplasm. It carries out the reaction L-lysyl-[protein] + 3 S-adenosyl-L-methionine = N(6),N(6),N(6)-trimethyl-L-lysyl-[protein] + 3 S-adenosyl-L-homocysteine + 3 H(+). In terms of biological role, methylates ribosomal protein L11. This chain is Ribosomal protein L11 methyltransferase, found in Actinobacillus pleuropneumoniae serotype 5b (strain L20).